The chain runs to 161 residues: Pathogenesis-related protein 1 (161 aa).

Positions 1–26 (MKVTSYSRILIILAALVGALVVPLKA) are cleaved as a signal peptide. The SCP domain occupies 34–149 (VNAHNQARSQ…NGGTIISCNY (116 aa)). 3 disulfides stabilise this stretch: cysteine 70/cysteine 138, cysteine 113/cysteine 117, and cysteine 133/cysteine 147.

It belongs to the CRISP family. Expressed in flowers, stems and roots but not in leaves.

In terms of biological role, probably involved in the defense reaction of plants against pathogens. The polypeptide is Pathogenesis-related protein 1 (Arabidopsis thaliana (Mouse-ear cress)).